The sequence spans 279 residues: MLRLRVFDRHKRLWSVLQSTIRGNNISNHIPNTTCRSSAPPHLCARQRAFYSQNSPKTPNPGSSAGIKLRTRLVVTLLFGGGIIGTWWYVHQEKEKRIQMQRLEQLRKVALGQGDFHLLDHTGQRRTKRDFLGHWVLLYFGFTHCPDICPDELEKLTSVVHILDKDPSLPSVQPLFITVDPERDDVSAMARYVKDFHPRLVGLTGSAEEVKQAGRDFRVYASNGPKDEDGDYIVDHSIVIYLVNPDGLFIDYYNRMKNDTQIAESIRNHMKTFVRLFPD.

A helical transmembrane segment spans residues 73–90 (LVVTLLFGGGIIGTWWYV). Topologically, residues 91–279 (HQEKEKRIQM…MKTFVRLFPD (189 aa)) are mitochondrial intermembrane. Positions 97-271 (RIQMQRLEQL…IAESIRNHMK (175 aa)) constitute a Thioredoxin domain. Residues Cys145, Cys149, and His236 each coordinate Cu cation. An intrachain disulfide couples Cys145 to Cys149.

This sequence belongs to the SCO1/2 family. In terms of assembly, homodimer.

The protein localises to the mitochondrion inner membrane. Its function is as follows. Copper metallochaperone essential for the synthesis and maturation of cytochrome c oxidase subunit II (MT-CO2/COX2) by facilitating the incorporation of copper into the Cu(A) site of MT-CO2/COX2. Could also act as a thiol-disulfide oxidoreductase to regulate the redox state of the cysteines in SCO1 during maturation of MT-CO2/COX2. In Danio rerio (Zebrafish), this protein is Protein SCO2 homolog, mitochondrial (sco2).